Here is a 154-residue protein sequence, read N- to C-terminus: MSDLDRLASRAAIQDLYSDQLIGVDKRQEGRLASIWWDDAEWTIEGIGTYKGPEGALDLANNVLWPMYHETIHYGTNLRLEFVSADKVNGIGDVLCLGNLVEGNQSILIAAVYTNEYERRDGVWKLSKLNGCMNYFTPLAGIHFAPPGALLQKS.

The active site involves Asp-25. The active-site Proton acceptor is His-73.

It belongs to the HCH dehydrochlorinase family. As to quaternary structure, homotrimer.

The protein localises to the periplasm. It carries out the reaction gamma-hexachlorocyclohexane = (3R,4S,5S,6R)-pentachlorocyclohexene + chloride + H(+). The catalysed reaction is (3R,4S,5S,6R)-pentachlorocyclohexene = (3R,6R)-1,3,4,6-tetrachlorocyclohexa-1,4-diene + chloride + H(+). Its pathway is xenobiotic degradation; hexachlorocyclohexane degradation. Its function is as follows. Catalyzes the conversion of the important environmental pollutant gamma-hexachlorocyclohexane (gamma-HCH or lindane) to 1,3,4,6-tetrachloro-1,4-cyclohexadiene (1,4-TCDN) via gamma-pentachlorocyclohexene (gamma-PCCH). Proceeds by two successive 1,2-anti conformationally dependent dehydrochlorinations. Also shows activity with alpha- and delta-HCH, giving alpha- and delta-PCCH respectively, but not with the beta isomer. In Sphingobium indicum (strain DSM 16412 / CCM 7286 / MTCC 6364 / B90A), this protein is Hexachlorocyclohexane dehydrochlorinase 1.